The following is a 415-amino-acid chain: Camphor 5-monooxygenase (415 aa).

Position 358 (C358) interacts with heme.

It belongs to the cytochrome P450 family. Heme is required as a cofactor.

It is found in the cytoplasm. The enzyme catalyses 2 reduced [2Fe-2S]-[putidaredoxin] + (1R,4R)-camphor + O2 + 2 H(+) = (1R,4R,5R)-5-hydroxycamphor + 2 oxidized [2Fe-2S]-[putidaredoxin] + H2O. It functions in the pathway terpene metabolism; (R)-camphor degradation. Functionally, involved in a camphor oxidation system. This Pseudomonas putida (Arthrobacter siderocapsulatus) protein is Camphor 5-monooxygenase (camC).